We begin with the raw amino-acid sequence, 263 residues long: Small ribosomal subunit protein uS2 (263 aa).

A disordered region spans residues 228 to 263 (QLEEPEADLADEDDNGMTTSDDGDAEALDIPDDSDA). Residues 230-263 (EEPEADLADEDDNGMTTSDDGDAEALDIPDDSDA) show a composition bias toward acidic residues.

Belongs to the universal ribosomal protein uS2 family.

This Thermosynechococcus vestitus (strain NIES-2133 / IAM M-273 / BP-1) protein is Small ribosomal subunit protein uS2.